The following is a 425-amino-acid chain: Histidinol dehydrogenase (425 aa).

NAD(+) contacts are provided by tyrosine 124, glutamine 184, and asparagine 207. Residues serine 230, glutamine 252, and histidine 255 each coordinate substrate. Positions 252 and 255 each coordinate Zn(2+). Catalysis depends on proton acceptor residues glutamate 321 and histidine 322. Substrate is bound by residues histidine 322, aspartate 355, glutamate 409, and histidine 414. Residue aspartate 355 participates in Zn(2+) binding. Histidine 414 is a Zn(2+) binding site.

Belongs to the histidinol dehydrogenase family. Requires Zn(2+) as cofactor.

The catalysed reaction is L-histidinol + 2 NAD(+) + H2O = L-histidine + 2 NADH + 3 H(+). Its pathway is amino-acid biosynthesis; L-histidine biosynthesis; L-histidine from 5-phospho-alpha-D-ribose 1-diphosphate: step 9/9. Functionally, catalyzes the sequential NAD-dependent oxidations of L-histidinol to L-histidinaldehyde and then to L-histidine. The sequence is that of Histidinol dehydrogenase from Halobacterium salinarum (strain ATCC 700922 / JCM 11081 / NRC-1) (Halobacterium halobium).